The chain runs to 312 residues: tRNA dimethylallyltransferase (312 aa).

11–18 (GATATGKT) contributes to the ATP binding site. 13–18 (TATGKT) contacts substrate. The tract at residues 36–39 (DSRQ) is interaction with substrate tRNA.

This sequence belongs to the IPP transferase family. As to quaternary structure, monomer. Mg(2+) serves as cofactor.

The enzyme catalyses adenosine(37) in tRNA + dimethylallyl diphosphate = N(6)-dimethylallyladenosine(37) in tRNA + diphosphate. In terms of biological role, catalyzes the transfer of a dimethylallyl group onto the adenine at position 37 in tRNAs that read codons beginning with uridine, leading to the formation of N6-(dimethylallyl)adenosine (i(6)A). The sequence is that of tRNA dimethylallyltransferase from Thermosynechococcus vestitus (strain NIES-2133 / IAM M-273 / BP-1).